The sequence spans 260 residues: Ribosomal RNA small subunit methyltransferase G (260 aa).

Residues 1–45 (MKQRGPAGGRSSSPKPSAPGSGAGEGPDGRSAPASQKINKASAND) are disordered. The span at 9–20 (GRSSSPKPSAPG) shows a compositional bias: low complexity. The segment covering 33-45 (PASQKINKASAND) has biased composition (polar residues). S-adenosyl-L-methionine is bound by residues Gly-123, Phe-128, and Arg-193.

It belongs to the methyltransferase superfamily. RNA methyltransferase RsmG family.

Its subcellular location is the cytoplasm. It carries out the reaction guanosine(527) in 16S rRNA + S-adenosyl-L-methionine = N(7)-methylguanosine(527) in 16S rRNA + S-adenosyl-L-homocysteine. Specifically methylates the N7 position of guanine in position 527 of 16S rRNA. This is Ribosomal RNA small subunit methyltransferase G from Bradyrhizobium diazoefficiens (strain JCM 10833 / BCRC 13528 / IAM 13628 / NBRC 14792 / USDA 110).